A 180-amino-acid chain; its full sequence is MSRKGKLPISLPNGVEVKVSNTEVAVKGPKGALTQKLIPGVNVNVEGNEVLVSLADEEAKLAHFHGLYRTLIHNMVVGTTEGFEKKLEMIGVGYRAAVQGDLLDLQLGFSHPCKLPIPKGLAVKVDKNTLITISGFDKHLVGQFAATVRSQRPPEPYQGKGIRYAGEFVRKKAGKAAAKK.

This sequence belongs to the universal ribosomal protein uL6 family. Part of the 50S ribosomal subunit.

In terms of biological role, this protein binds to the 23S rRNA, and is important in its secondary structure. It is located near the subunit interface in the base of the L7/L12 stalk, and near the tRNA binding site of the peptidyltransferase center. This Protochlamydia amoebophila (strain UWE25) protein is Large ribosomal subunit protein uL6.